Here is a 94-residue protein sequence, read N- to C-terminus: Small ribosomal subunit protein bS18 (94 aa).

Belongs to the bacterial ribosomal protein bS18 family. Part of the 30S ribosomal subunit. Forms a tight heterodimer with protein bS6.

In terms of biological role, binds as a heterodimer with protein bS6 to the central domain of the 16S rRNA, where it helps stabilize the platform of the 30S subunit. This Leptospira biflexa serovar Patoc (strain Patoc 1 / Ames) protein is Small ribosomal subunit protein bS18.